The sequence spans 174 residues: Trypsin inhibitor BvTI (174 aa).

Cystine bridges form between cysteine 41–cysteine 84 and cysteine 131–cysteine 138.

The protein belongs to the protease inhibitor I3 (leguminous Kunitz-type inhibitor) family.

Its subcellular location is the secreted. Functionally, inhibits bovine trypsin and chymotrypsin, and human plasmin, plasma kallikrein and factor XIIa. This Bauhinia variegata (Purple orchid tree) protein is Trypsin inhibitor BvTI.